The primary structure comprises 148 residues: Endoribonuclease YbeY (148 aa).

Residues histidine 112, histidine 116, and histidine 122 each contribute to the Zn(2+) site.

The protein belongs to the endoribonuclease YbeY family. It depends on Zn(2+) as a cofactor.

Its subcellular location is the cytoplasm. Functionally, single strand-specific metallo-endoribonuclease involved in late-stage 70S ribosome quality control and in maturation of the 3' terminus of the 16S rRNA. This is Endoribonuclease YbeY from Albidiferax ferrireducens (strain ATCC BAA-621 / DSM 15236 / T118) (Rhodoferax ferrireducens).